The primary structure comprises 459 residues: tRNA modification GTPase MnmE (459 aa).

(6S)-5-formyl-5,6,7,8-tetrahydrofolate contacts are provided by R25, E87, and R126. A TrmE-type G domain is found at 221 to 380; it reads GLKVAIVGRP…LETAILEIVQ (160 aa). Residue N231 coordinates K(+). GTP is bound by residues 231-236, 250-256, and 275-278; these read NVGKSS, TDLPGTT, and DTAG. S235 lines the Mg(2+) pocket. Residues T250, L252, and T255 each contribute to the K(+) site. T256 serves as a coordination point for Mg(2+). K459 is a (6S)-5-formyl-5,6,7,8-tetrahydrofolate binding site.

Belongs to the TRAFAC class TrmE-Era-EngA-EngB-Septin-like GTPase superfamily. TrmE GTPase family. In terms of assembly, homodimer. Heterotetramer of two MnmE and two MnmG subunits. The cofactor is K(+).

It localises to the cytoplasm. In terms of biological role, exhibits a very high intrinsic GTPase hydrolysis rate. Involved in the addition of a carboxymethylaminomethyl (cmnm) group at the wobble position (U34) of certain tRNAs, forming tRNA-cmnm(5)s(2)U34. In Nostoc sp. (strain PCC 7120 / SAG 25.82 / UTEX 2576), this protein is tRNA modification GTPase MnmE.